Consider the following 21-residue polypeptide: Fibrinogen beta chain (21 aa).

Residue Q1 is modified to Pyrrolidone carboxylic acid. Over residues 1-11 (QHSTDYDEVED) the composition is skewed to acidic residues. The interval 1–21 (QHSTDYDEVEDDRAKLHLDAR) is disordered. Residue T4 is glycosylated (O-linked (GalNAc...) threonine). Y6 is subject to Sulfotyrosine. The segment covering 12-21 (DRAKLHLDAR) has biased composition (basic and acidic residues).

In terms of assembly, heterohexamer; disulfide linked. Contains 2 sets of 3 non-identical chains (alpha, beta and gamma). The 2 heterotrimers are in head to head conformation with the N-termini in a small central domain. Conversion of fibrinogen to fibrin is triggered by thrombin, which cleaves fibrinopeptides A and B from alpha and beta chains, and thus exposes the N-terminal polymerization sites responsible for the formation of the soft clot.

It localises to the secreted. In terms of biological role, cleaved by the protease thrombin to yield monomers which, together with fibrinogen alpha (FGA) and fibrinogen gamma (FGG), polymerize to form an insoluble fibrin matrix. Fibrin has a major function in hemostasis as one of the primary components of blood clots. In addition, functions during the early stages of wound repair to stabilize the lesion and guide cell migration during re-epithelialization. Was originally thought to be essential for platelet aggregation, based on in vitro studies using anticoagulated blood. However subsequent studies have shown that it is not absolutely required for thrombus formation in vivo. Enhances expression of SELP in activated platelets. Maternal fibrinogen is essential for successful pregnancy. Fibrin deposition is also associated with infection, where it protects against IFNG-mediated hemorrhage. May also facilitate the antibacterial immune response via both innate and T-cell mediated pathways. This is Fibrinogen beta chain (FGB) from Muntiacus muntjak (Barking deer).